Reading from the N-terminus, the 453-residue chain is Bifunctional protein GlmU (453 aa).

A pyrophosphorylase region spans residues 1–226 (MVAIAILAAG…YEEILGINDR (226 aa)). UDP-N-acetyl-alpha-D-glucosamine contacts are provided by residues 7–10 (LAAG), Lys-21, Gln-73, and 78–79 (GT). Asp-103 is a Mg(2+) binding site. UDP-N-acetyl-alpha-D-glucosamine contacts are provided by Gly-140, Glu-155, Asn-170, and Asn-224. Asn-224 serves as a coordination point for Mg(2+). The linker stretch occupies residues 227 to 247 (KQLALAYQILQNRIKDQAMAA). Positions 248–453 (GVTLIDPDSI…GWRLKQPDPT (206 aa)) are N-acetyltransferase. Positions 329 and 347 each coordinate UDP-N-acetyl-alpha-D-glucosamine. Catalysis depends on His-359, which acts as the Proton acceptor. Residues Tyr-362 and Asn-373 each coordinate UDP-N-acetyl-alpha-D-glucosamine. Acetyl-CoA-binding positions include Ala-376, 382–383 (NY), Ser-401, Ala-419, and Arg-436.

It in the N-terminal section; belongs to the N-acetylglucosamine-1-phosphate uridyltransferase family. This sequence in the C-terminal section; belongs to the transferase hexapeptide repeat family. Homotrimer. It depends on Mg(2+) as a cofactor.

It localises to the cytoplasm. It carries out the reaction alpha-D-glucosamine 1-phosphate + acetyl-CoA = N-acetyl-alpha-D-glucosamine 1-phosphate + CoA + H(+). The enzyme catalyses N-acetyl-alpha-D-glucosamine 1-phosphate + UTP + H(+) = UDP-N-acetyl-alpha-D-glucosamine + diphosphate. It functions in the pathway nucleotide-sugar biosynthesis; UDP-N-acetyl-alpha-D-glucosamine biosynthesis; N-acetyl-alpha-D-glucosamine 1-phosphate from alpha-D-glucosamine 6-phosphate (route II): step 2/2. Its pathway is nucleotide-sugar biosynthesis; UDP-N-acetyl-alpha-D-glucosamine biosynthesis; UDP-N-acetyl-alpha-D-glucosamine from N-acetyl-alpha-D-glucosamine 1-phosphate: step 1/1. The protein operates within bacterial outer membrane biogenesis; LPS lipid A biosynthesis. Its function is as follows. Catalyzes the last two sequential reactions in the de novo biosynthetic pathway for UDP-N-acetylglucosamine (UDP-GlcNAc). The C-terminal domain catalyzes the transfer of acetyl group from acetyl coenzyme A to glucosamine-1-phosphate (GlcN-1-P) to produce N-acetylglucosamine-1-phosphate (GlcNAc-1-P), which is converted into UDP-GlcNAc by the transfer of uridine 5-monophosphate (from uridine 5-triphosphate), a reaction catalyzed by the N-terminal domain. The protein is Bifunctional protein GlmU of Cyanothece sp. (strain PCC 7425 / ATCC 29141).